The chain runs to 260 residues: Ribosomal RNA small subunit methyltransferase J (260 aa).

Residues 125 to 126 (ER) and D179 contribute to the S-adenosyl-L-methionine site. Residues 234-260 (IDGPKPSHALDGKSSRYDIYPKKALKP) form a disordered region. Over residues 241–254 (HALDGKSSRYDIYP) the composition is skewed to basic and acidic residues.

It belongs to the methyltransferase superfamily. RsmJ family.

It is found in the cytoplasm. The enzyme catalyses guanosine(1516) in 16S rRNA + S-adenosyl-L-methionine = N(2)-methylguanosine(1516) in 16S rRNA + S-adenosyl-L-homocysteine + H(+). Its function is as follows. Specifically methylates the guanosine in position 1516 of 16S rRNA. The sequence is that of Ribosomal RNA small subunit methyltransferase J from Pseudomonas fluorescens (strain SBW25).